A 293-amino-acid chain; its full sequence is Probable porphobilinogen deaminase (293 aa).

S-(dipyrrolylmethanemethyl)cysteine is present on Cys-233.

This sequence belongs to the HMBS family. Dipyrromethane is required as a cofactor.

It carries out the reaction 4 porphobilinogen + H2O = hydroxymethylbilane + 4 NH4(+). It participates in porphyrin-containing compound metabolism; protoporphyrin-IX biosynthesis; coproporphyrinogen-III from 5-aminolevulinate: step 2/4. Functionally, tetrapolymerization of the monopyrrole PBG into the hydroxymethylbilane pre-uroporphyrinogen in several discrete steps. The polypeptide is Probable porphobilinogen deaminase (Saccharolobus islandicus (strain M.16.27) (Sulfolobus islandicus)).